Reading from the N-terminus, the 481-residue chain is MELFYVPLLSLFVLFISLSFHFLFYKSKPSSSGGFPLPPGKTGWPIIGESYEFLSTGWKGYPEKFIFDRMTKYSSNVFKTSIFGEPAAVFCGAACNKFLFSNENKLVQAWWPDSVNKVFPSSTQTSSKEEAIKMRKMLPNFFKPEALQRYIGLMDQIAANHFESGWENKNEVVVFPLAKSYTFWIACKVFVSVEEPAQVAELLEPFSAIASGIISVPIDLPGTPFNSAIKSSKIVRRKLVGIIKQRKIDLGEGKASATQDILSHMLLTSDESGKFMGEGDIADKILGLLIGGHDTASSACTFVVKFLAELPQIYEGVYQEQMEIVKSKKAGELLKWEDIQKMKYSWNVACEVLRLAPPLQGAFREALSDFTYNGFSIPKGWKLYWSANSTHINSEVFPEPLKFDPSRFDGAGPPPFSFVPFGGGPRMCPGKEYARLEILVFMHHLVKRFKWEKVIPDEKIVVNPMPIPANGLPVRLFPHKA.

A helical transmembrane segment spans residues 4-24 (FYVPLLSLFVLFISLSFHFLF). Cys-428 contributes to the heme binding site.

It belongs to the cytochrome P450 family. Heme is required as a cofactor. As to expression, mostly expressed in roots, and, to a lower extent, in stems and leaves. Accumulates only in the rhizome of plants.

The protein resides in the membrane. The catalysed reaction is beta-amyrin + 3 reduced [NADPH--hemoprotein reductase] + 3 O2 = oleanolate + 3 oxidized [NADPH--hemoprotein reductase] + 4 H2O + 4 H(+). It functions in the pathway secondary metabolite biosynthesis; terpenoid biosynthesis. Component of the oleanane-type triterpene saponins (e.g. ginsenosides or panaxosides) biosynthetic pathway. Catalyzes the carboxylation of beta-amyrin at the C-28 position to form oleanolic acid during ginsenoside biosynthesis, a class of tetracyclic triterpenoid saponins. The sequence is that of Beta-amyrin 28-monooxygenase from Panax ginseng (Korean ginseng).